The following is a 153-amino-acid chain: Prophage Rz endopeptidase RzpD (153 aa).

In terms of biological role, necessary for host cell lysis. It is believed to code for an endopeptidase that cleaves the amino-carboxyl cross-link between the diaminopimelic acid and D-alanine residues in the murein component of the bacterial cell wall. This Escherichia coli (strain K12) protein is Prophage Rz endopeptidase RzpD (rzpD).